We begin with the raw amino-acid sequence, 433 residues long: Putative purine permease YbbY (433 aa).

Residues 1 to 17 (MFNFAVSRESLLSGFQW) are Periplasmic-facing. Residues 18 to 38 (FFFIFCNTVVVPPTLLSAFQL) form a helical membrane-spanning segment. The Cytoplasmic portion of the chain corresponds to 39-42 (PQSS). The helical transmembrane segment at 43–63 (LLTLTQYAFLATALACFAQAF) threads the bilayer. Topologically, residues 64-68 (CGHRR) are periplasmic. Residues 69–89 (AIMEGPGGLWWGTILTITLGE) form a helical membrane-spanning segment. Residues 90–102 (ASRGTPINDIATS) lie on the Cytoplasmic side of the membrane. The chain crosses the membrane as a helical span at residues 103-123 (LAVGIALSGVLTMLIGFSGLG). Topologically, residues 124–130 (HRLARLF) are periplasmic. Residues 131 to 151 (TPSVMVLFMLMLGAQLTTIFF) traverse the membrane as a helical segment. Topologically, residues 152–169 (KGMLGLPFGIADPNFKIQ) are cytoplasmic. Residues 170–190 (LPPFALSVAVMCLVLAMIIFL) traverse the membrane as a helical segment. The Periplasmic segment spans residues 191–196 (PQRFAR). The helical transmembrane segment at 197–217 (YGLLVGTITGWLLWYFCFPSS) threads the bilayer. Residues 218-230 (HSLSGELHWQWFP) lie on the Cytoplasmic side of the membrane. The helical transmembrane segment at 231-251 (LGSGGALSPGIILTAVITGLV) threads the bilayer. At 252–288 (NISNTYGAIRGTDVFYPQQGAGNTRYRRSFVATGFMT) the chain is on the periplasmic side. The chain crosses the membrane as a helical span at residues 289-309 (LITVPLAVIPFSPFVSSIGLL). The Cytoplasmic portion of the chain corresponds to 310–319 (TQTGDYTRRS). The helical transmembrane segment at 320–340 (FIYGSVICLLVALVPALTRLF) threads the bilayer. Over 341-345 (CSIPL) the chain is Periplasmic. The chain crosses the membrane as a helical span at residues 346–366 (PVSSAVMLVSYLPLLFSALVF). The Cytoplasmic segment spans residues 367–379 (SQQITFTARNIYR). The helical transmembrane segment at 380 to 400 (LALPLFVGIFLMALPPVYLQD) threads the bilayer. Residues 401–407 (LPLTLRP) are Periplasmic-facing. Residues 408–428 (LLSNGLLVGILLAVLMDNLIP) traverse the membrane as a helical segment. Over 429–433 (WERIE) the chain is Cytoplasmic.

It belongs to the nucleobase:cation symporter-2 (NCS2) (TC 2.A.40) family.

The protein resides in the cell inner membrane. This chain is Putative purine permease YbbY (ybbY), found in Escherichia coli (strain K12).